A 390-amino-acid chain; its full sequence is Chalcone synthase (390 aa).

Cysteine 164 is an active-site residue.

It belongs to the thiolase-like superfamily. Chalcone/stilbene synthases family.

The catalysed reaction is (E)-4-coumaroyl-CoA + 3 malonyl-CoA + 3 H(+) = 2',4,4',6'-tetrahydroxychalcone + 3 CO2 + 4 CoA. The protein operates within secondary metabolite biosynthesis; flavonoid biosynthesis. In terms of biological role, the primary product of this enzyme is 4,2',4',6'-tetrahydroxychalcone (also termed naringenin-chalcone or chalcone) which undergoes enzyme-catalyzed or spontaneous isomerization into naringenin. The protein is Chalcone synthase of Hypericum androsaemum (Tutsan).